A 344-amino-acid chain; its full sequence is Glutamine synthetase (344 aa).

The GS beta-grasp domain maps to 4 to 86 (YKLEYIWLDG…VMCEVMMPDG (83 aa)). A GS catalytic domain is found at 89–344 (PHASNKRATI…SVPTEKKAVA (256 aa)). Residues E109 and E111 each contribute to the Mg(2+) site. E167 is an ATP binding site. The Mg(2+) site is built by E172 and E179. E278 is a binding site for L-glutamate.

It belongs to the glutamine synthetase family. Homooctamer and homotetramer. The cofactor is Mg(2+).

It is found in the cytoplasm. The enzyme catalyses L-glutamate + NH4(+) + ATP = L-glutamine + ADP + phosphate + H(+). In terms of biological role, catalyzes the ATP-dependent biosynthesis of glutamine from glutamate and ammonia. In Bradyrhizobium diazoefficiens (strain JCM 10833 / BCRC 13528 / IAM 13628 / NBRC 14792 / USDA 110), this protein is Glutamine synthetase.